Reading from the N-terminus, the 419-residue chain is Dynein regulatory complex protein 9 (419 aa).

Disordered regions lie at residues 1-47 and 393-419; these read MEGE…SPEV and SFKM…RGKK. The segment covering 34–44 has biased composition (acidic residues); it reads EELEEEEEETS. The IQ domain occupies 371-400; sequence ELRSIVKLQAWWRGTVVRREIGSFKMPKKE.

This sequence belongs to the DRC9 family. In terms of assembly, component of the nexin-dynein regulatory complex (N-DRC). Interacts (via IQ domain) with CALM when calcium levels are low. Does not interact with CALM in the presence of Ca(2+). Interacts with the HSP70 proteins HSPA1L and HSPA8. May form a complex with CAMK4 and HSP70.

Its subcellular location is the cytoplasm. The protein resides in the cell projection. The protein localises to the cilium. It localises to the flagellum. It is found in the cytoskeleton. Its subcellular location is the flagellum axoneme. Component of the nexin-dynein regulatory complex (N-DRC), a key regulator of ciliary/flagellar motility which maintains the alignment and integrity of the distal axoneme and regulates microtubule sliding in motile axonemes. Binds calmodulin when cellular Ca(2+) levels are low and thereby contributes to the regulation of calcium and calmodulin-dependent protein kinase IV (CAMK4) activity; contributes to the regulation of CAMK4 signaling cascades. Required for normal axoneme assembly in sperm flagella, normal sperm tail formation and for male fertility. This is Dynein regulatory complex protein 9 (Iqcg) from Rattus norvegicus (Rat).